Reading from the N-terminus, the 245-residue chain is 14-3-3 protein zeta/delta (245 aa).

Met1 bears the N-acetylmethionine mark. Residue Lys3 is modified to N6-acetyllysine. Ser58 carries the post-translational modification Phosphoserine; by PKA. Lys68 carries the N6-acetyllysine modification. A phosphoserine mark is found at Ser184, Ser207, and Ser210. Thr232 bears the Phosphothreonine; by CK1 mark.

The protein belongs to the 14-3-3 family. As to quaternary structure, homodimer. Heterodimerizes with YWHAE. Homo- and heterodimerization is inhibited by phosphorylation on Ser-58. Interacts with FOXO4, NOXA1, SSH1 and ARHGEF2. Interacts with CDK16 and with WEE1 (C-terminal). Interacts with MLF1 (phosphorylated form); the interaction retains it in the cytoplasm. Interacts with BSPRY. Interacts with Thr-phosphorylated ITGB2. Interacts with Pseudomonas aeruginosa exoS (unphosphorylated form). Interacts with BAX; the interaction occurs in the cytoplasm. Under stress conditions, MAPK8-mediated phosphorylation releases BAX to mitochondria. Interacts with phosphorylated RAF1; the interaction is inhibited when YWHAZ is phosphorylated on Thr-232. Interacts with TP53; the interaction enhances p53 transcriptional activity. The Ser-58 phosphorylated form inhibits this interaction and p53 transcriptional activity. Interacts with ABL1 (phosphorylated form); the interaction retains ABL1 in the cytoplasm. Interacts with PKA-phosphorylated AANAT; the interaction modulates AANAT enzymatic activity by increasing affinity for arylalkylamines and acetyl-CoA and protecting the enzyme from dephosphorylation and proteasomal degradation. It may also prevent thiol-dependent inactivation. Interacts with AKT1; the interaction phosphorylates YWHAZ and modulates dimerization. Interacts with GAB2. Interacts with SAMSN1. Interacts with BCL2L11 and TLK2. Interacts with the 'Thr-369' phosphorylated form of DAPK2. Interacts with PI4KB, TBC1D22A and TBC1D22B. Interacts with ZFP36L1 (via phosphorylated form); this interaction occurs in a p38 MAPK- and AKT-signaling pathways. Interacts with SLITRK1. Interacts with AK5, LDB1, MADD, PDE1A and SMARCB1. Interacts with ARHGEF7 and GIT1. Interacts with MEFV. Interacts with ADAM22 (via C-terminus). In terms of processing, the delta, brain-specific form differs from the zeta form in being phosphorylated. Phosphorylation on Ser-184 by MAPK8; promotes dissociation of BAX and translocation of BAX to mitochondria. Phosphorylation on Thr-232; inhibits binding of RAF1. Phosphorylated on Ser-58 by PKA and protein kinase C delta type catalytic subunit in a sphingosine-dependent fashion. Phosphorylation on Ser-58 by PKA; disrupts homodimerization and heterodimerization with YHAE and TP53.

It is found in the cytoplasm. The protein localises to the melanosome. Its function is as follows. Adapter protein implicated in the regulation of a large spectrum of both general and specialized signaling pathways. Binds to a large number of partners, usually by recognition of a phosphoserine or phosphothreonine motif. Binding generally results in the modulation of the activity of the binding partner. Promotes cytosolic retention and inactivation of TFEB transcription factor by binding to phosphorylated TFEB. Induces ARHGEF7 activity on RAC1 as well as lamellipodia and membrane ruffle formation. In neurons, regulates spine maturation through the modulation of ARHGEF7 activity. The protein is 14-3-3 protein zeta/delta (Ywhaz) of Mus musculus (Mouse).